The sequence spans 107 residues: Small ribosomal subunit protein uS15 (107 aa).

The residue at position 27 (Lys-27) is an N6-acetyllysine; alternate. Lys-27 is modified (N6-succinyllysine; alternate). Lys-27 is covalently cross-linked (Glycyl lysine isopeptide (Lys-Gly) (interchain with G-Cter in ubiquitin)). Ser-30 carries the post-translational modification Phosphoserine. Lys-34 carries the N6-succinyllysine modification. Tyr-38 is subject to Phosphotyrosine. Residue Lys-43 forms a Glycyl lysine isopeptide (Lys-Gly) (interchain with G-Cter in SUMO2) linkage.

The protein belongs to the universal ribosomal protein uS15 family. As to quaternary structure, component of the small ribosomal subunit. Part of the small subunit (SSU) processome, composed of more than 70 proteins and the RNA chaperone small nucleolar RNA (snoRNA) U3. Post-translationally, ubiquitinated at Lys-27 by RNF14 and RNF25 in response to ribosome collisions (ribosome stalling).

It localises to the cytoplasm. It is found in the nucleus. Its subcellular location is the nucleolus. Component of the small ribosomal subunit. The ribosome is a large ribonucleoprotein complex responsible for the synthesis of proteins in the cell. Part of the small subunit (SSU) processome, first precursor of the small eukaryotic ribosomal subunit. During the assembly of the SSU processome in the nucleolus, many ribosome biogenesis factors, an RNA chaperone and ribosomal proteins associate with the nascent pre-rRNA and work in concert to generate RNA folding, modifications, rearrangements and cleavage as well as targeted degradation of pre-ribosomal RNA by the RNA exosome. The polypeptide is Small ribosomal subunit protein uS15 (RPS13) (Sus scrofa (Pig)).